The chain runs to 317 residues: Transaldolase 1 (317 aa).

K132 acts as the Schiff-base intermediate with substrate in catalysis.

The protein belongs to the transaldolase family. Type 1 subfamily. As to quaternary structure, homodimer.

It is found in the cytoplasm. The catalysed reaction is D-sedoheptulose 7-phosphate + D-glyceraldehyde 3-phosphate = D-erythrose 4-phosphate + beta-D-fructose 6-phosphate. It functions in the pathway carbohydrate degradation; pentose phosphate pathway; D-glyceraldehyde 3-phosphate and beta-D-fructose 6-phosphate from D-ribose 5-phosphate and D-xylulose 5-phosphate (non-oxidative stage): step 2/3. Its function is as follows. Transaldolase is important for the balance of metabolites in the pentose-phosphate pathway. This is Transaldolase 1 from Shigella sonnei (strain Ss046).